Here is a 581-residue protein sequence, read N- to C-terminus: DNA primase (581 aa).

The segment at 40 to 64 (CPFHNEKTPSFTVNGEKQFYHCFGC) adopts a CHC2-type zinc-finger fold. Residues 259–341 (NRLLVVEGYM…GRQLRFMFLP (83 aa)) enclose the Toprim domain. The Mg(2+) site is built by E265, D309, and D311.

It belongs to the DnaG primase family. As to quaternary structure, monomer. Interacts with DnaB. The cofactor is Zn(2+). Mg(2+) is required as a cofactor.

It catalyses the reaction ssDNA + n NTP = ssDNA/pppN(pN)n-1 hybrid + (n-1) diphosphate.. Its function is as follows. RNA polymerase that catalyzes the synthesis of short RNA molecules used as primers for DNA polymerase during DNA replication. The chain is DNA primase from Escherichia coli O6:H1 (strain CFT073 / ATCC 700928 / UPEC).